The following is a 345-amino-acid chain: Tropomodulin-4 (345 aa).

Disordered regions lie at residues 40–64 (PENM…GPLD) and 326–345 (ARAA…QKKR). The segment covering 336 to 345 (NELRRQQKKR) has biased composition (basic and acidic residues).

Belongs to the tropomodulin family. Binds to the N-terminus of tropomyosin and to actin.

The protein localises to the cytoplasm. It localises to the cytoskeleton. Its function is as follows. Blocks the elongation and depolymerization of the actin filaments at the pointed end. The Tmod/TM complex contributes to the formation of the short actin protofilament, which in turn defines the geometry of the membrane skeleton. This chain is Tropomodulin-4 (Tmod4), found in Mus musculus (Mouse).